The primary structure comprises 340 residues: Coproporphyrin III ferrochelatase (340 aa).

Residues Ser-52 and Tyr-116 each contribute to the Fe-coproporphyrin III site. Residues His-172 and Glu-255 each coordinate Fe(2+).

Belongs to the ferrochelatase family.

It is found in the cytoplasm. It catalyses the reaction Fe-coproporphyrin III + 2 H(+) = coproporphyrin III + Fe(2+). Its pathway is porphyrin-containing compound metabolism; protoheme biosynthesis. In terms of biological role, involved in coproporphyrin-dependent heme b biosynthesis. Catalyzes the insertion of ferrous iron into coproporphyrin III to form Fe-coproporphyrin III. The sequence is that of Coproporphyrin III ferrochelatase from Mycobacterium ulcerans (strain Agy99).